Consider the following 427-residue polypeptide: Tyrosine--tRNA ligase (427 aa).

An L-tyrosine-binding site is contributed by Tyr33. The short motif at 38–47 (PTASSLTIGN) is the 'HIGH' region element. L-tyrosine is bound by residues Tyr168 and Gln172. The 'KMSKS' region signature appears at 228-232 (KFGKS). Lys231 is an ATP binding site. The S4 RNA-binding domain maps to 361 to 427 (LDLLSTLTNS…KKNYYLLRFN (67 aa)).

This sequence belongs to the class-I aminoacyl-tRNA synthetase family. TyrS type 1 subfamily. As to quaternary structure, homodimer.

The protein resides in the cytoplasm. It catalyses the reaction tRNA(Tyr) + L-tyrosine + ATP = L-tyrosyl-tRNA(Tyr) + AMP + diphosphate + H(+). Its function is as follows. Catalyzes the attachment of tyrosine to tRNA(Tyr) in a two-step reaction: tyrosine is first activated by ATP to form Tyr-AMP and then transferred to the acceptor end of tRNA(Tyr). The protein is Tyrosine--tRNA ligase of Cytophaga hutchinsonii (strain ATCC 33406 / DSM 1761 / CIP 103989 / NBRC 15051 / NCIMB 9469 / D465).